A 195-amino-acid chain; its full sequence is Oocyte-secreted protein 3 (195 aa).

Positions 1-21 are cleaved as a signal peptide; that stretch reads MKAFVASGLLLLIFGMWRCSG. N-linked (GlcNAc...) asparagine glycosylation is present at Asn-102.

The protein belongs to the PLAC1 family. Oocyte-specific.

Its subcellular location is the secreted. This chain is Oocyte-secreted protein 3, found in Mus musculus (Mouse).